The chain runs to 20 residues: Protein PR-L5 (20 aa).

It belongs to the BetVI family.

The chain is Protein PR-L5 from Lupinus luteus (European yellow lupine).